The following is a 323-amino-acid chain: Annexin A3 (323 aa).

Ala2 bears the N-acetylalanine mark. 4 Annexin repeats span residues 18–89 (FNPS…ALVT), 90–161 (PPAV…ILAN), 173–245 (QLAR…AIVR), and 249–320 (NTPA…KICG). Lys177 bears the N6-acetyllysine mark. Thr267 is modified (phosphothreonine).

It belongs to the annexin family.

Its function is as follows. Inhibitor of phospholipase A2, also possesses anti-coagulant properties. Also cleaves the cyclic bond of inositol 1,2-cyclic phosphate to form inositol 1-phosphate. The protein is Annexin A3 (ANXA3) of Bos taurus (Bovine).